The following is a 254-amino-acid chain: PHD finger protein ALFIN-LIKE 8 (254 aa).

Positions 137 to 194 are disordered; that stretch reads GTAKKQSKEKTPKTSGKSNKSGTKPSRQPEPNSRGPKMPPPKDEDDSGGEEEEEEEDH. Residues 149-162 show a composition bias toward low complexity; the sequence is KTSGKSNKSGTKPS. Acidic residues predominate over residues 179-194; the sequence is DEDDSGGEEEEEEEDH. The PHD-type zinc finger occupies 196–248; the sequence is NTLCGACGDNYGQDEFWICCDACETWFHGKCVKITPAKAEHIKHYKCPNCSSS.

The protein belongs to the Alfin family. As to quaternary structure, interacts with H3K4me3 and to a lesser extent with H3K4me2.

It is found in the nucleus. Its function is as follows. Histone-binding component that specifically recognizes H3 tails trimethylated on 'Lys-4' (H3K4me3), which mark transcription start sites of virtually all active genes. The protein is PHD finger protein ALFIN-LIKE 8 of Oryza sativa subsp. japonica (Rice).